A 620-amino-acid chain; its full sequence is Chaperone protein HscA homolog (620 aa).

The protein belongs to the heat shock protein 70 family.

In terms of biological role, chaperone involved in the maturation of iron-sulfur cluster-containing proteins. Has a low intrinsic ATPase activity which is markedly stimulated by HscB. The sequence is that of Chaperone protein HscA homolog from Bordetella petrii (strain ATCC BAA-461 / DSM 12804 / CCUG 43448).